A 273-amino-acid polypeptide reads, in one-letter code: 2,3,4,5-tetrahydropyridine-2,6-dicarboxylate N-succinyltransferase (273 aa).

Residues Arg-104 and Asp-141 each coordinate substrate.

The protein belongs to the transferase hexapeptide repeat family. In terms of assembly, homotrimer.

It localises to the cytoplasm. It catalyses the reaction (S)-2,3,4,5-tetrahydrodipicolinate + succinyl-CoA + H2O = (S)-2-succinylamino-6-oxoheptanedioate + CoA. The protein operates within amino-acid biosynthesis; L-lysine biosynthesis via DAP pathway; LL-2,6-diaminopimelate from (S)-tetrahydrodipicolinate (succinylase route): step 1/3. This Nitrosomonas europaea (strain ATCC 19718 / CIP 103999 / KCTC 2705 / NBRC 14298) protein is 2,3,4,5-tetrahydropyridine-2,6-dicarboxylate N-succinyltransferase.